A 550-amino-acid polypeptide reads, in one-letter code: Methyl-coenzyme M reductase I subunit alpha (550 aa).

A coenzyme F430-binding site is contributed by Q147. Coenzyme B-binding positions include R225, 256-257, and R270; that span reads KH. A Pros-methylhistidine modification is found at H257. R271 is subject to 5-methylarginine. Coenzyme M is bound at residue Y333. Q400 is subject to 2-methylglutamine. A coenzyme M-binding site is contributed by Y444. The residue at position 445 (G445) is a 1-thioglycine. D450 bears the (Z)-2,3-didehydroaspartate mark. Position 452 is an S-methylcysteine (C452).

It belongs to the methyl-coenzyme M reductase alpha subunit family. MCR is a hexamer of two alpha, two beta, and two gamma chains, forming a dimer of heterotrimers. Coenzyme F430 is required as a cofactor. The alpha subunit contains six modified amino acids near the active site region. Is methylated on His-257, Arg-271, Gln-400 and Cys-452, probably by the action of specific S-adenosylmethionine-dependent methyltransferases. Also contains a thioglycine at position 445, forming a thiopeptide bond. Contains a didehydroaspartate residue at position 450. The methylation on C5 of Arg-271 is a post-translational methylation not essential in vivo, but which plays a role for the stability and structural integrity of MCR.

The protein resides in the cytoplasm. The catalysed reaction is coenzyme B + methyl-coenzyme M = methane + coenzyme M-coenzyme B heterodisulfide. It functions in the pathway one-carbon metabolism; methyl-coenzyme M reduction; methane from methyl-coenzyme M: step 1/1. With respect to regulation, methyl-coenzyme M reductase activity is inhibited by 3-nitrooxypropanol (3-NOP) in vitro and in vivo, by oxidation of its active site Ni(I), which stops both growth and methanogenesis. Is also inhibited by the reaction product CoM-S-S-CoB. In terms of biological role, component of the methyl-coenzyme M reductase (MCR) I that catalyzes the reductive cleavage of methyl-coenzyme M (CoM-S-CH3 or 2-(methylthio)ethanesulfonate) using coenzyme B (CoB or 7-mercaptoheptanoylthreonine phosphate) as reductant which results in the production of methane and the mixed heterodisulfide of CoB and CoM (CoM-S-S-CoB). This is the final step in methanogenesis. Neither N-6-mercaptohexanoylthreonine phosphate (H-S-HxoTP) nor N-8-mercaptooctanoylthreonine phosphate (H-SOcoTP) nor any other thiol compound such as CoA or CoM can substitute for CoB as the electron donor. This Methanothermobacter marburgensis (strain ATCC BAA-927 / DSM 2133 / JCM 14651 / NBRC 100331 / OCM 82 / Marburg) (Methanobacterium thermoautotrophicum) protein is Methyl-coenzyme M reductase I subunit alpha (mcrA).